Here is a 1227-residue protein sequence, read N- to C-terminus: ATP-dependent helicase/nuclease subunit A (1227 aa).

Residues 37–503 enclose the UvrD-like helicase ATP-binding domain; it reads QKRTAEQIEA…ILLKENFRSQ (467 aa). An ATP-binding site is contributed by 58–65; the sequence is ASAGSGKT. The 285-residue stretch at 532–816 folds into the UvrD-like helicase C-terminal domain; it reads SLVAGSPGQK…QLMTIHKSKG (285 aa).

It belongs to the helicase family. AddA subfamily. Heterodimer of AddA and AddB/RexB. Mg(2+) serves as cofactor.

It carries out the reaction Couples ATP hydrolysis with the unwinding of duplex DNA by translocating in the 3'-5' direction.. The enzyme catalyses ATP + H2O = ADP + phosphate + H(+). Its function is as follows. The heterodimer acts as both an ATP-dependent DNA helicase and an ATP-dependent, dual-direction single-stranded exonuclease. Recognizes the chi site generating a DNA molecule suitable for the initiation of homologous recombination. The AddA nuclease domain is required for chi fragment generation; this subunit has the helicase and 3' -&gt; 5' nuclease activities. In Streptococcus suis (strain 98HAH33), this protein is ATP-dependent helicase/nuclease subunit A.